The primary structure comprises 144 residues: 3-dehydroquinate dehydratase (144 aa).

The active-site Proton acceptor is the Y22. The substrate site is built by N73, H79, and D86. H99 acts as the Proton donor in catalysis. Substrate-binding positions include 100–101 (IS) and R110.

The protein belongs to the type-II 3-dehydroquinase family. In terms of assembly, homododecamer.

It catalyses the reaction 3-dehydroquinate = 3-dehydroshikimate + H2O. Its pathway is metabolic intermediate biosynthesis; chorismate biosynthesis; chorismate from D-erythrose 4-phosphate and phosphoenolpyruvate: step 3/7. Its function is as follows. Catalyzes a trans-dehydration via an enolate intermediate. This chain is 3-dehydroquinate dehydratase, found in Mycobacteroides abscessus (strain ATCC 19977 / DSM 44196 / CCUG 20993 / CIP 104536 / JCM 13569 / NCTC 13031 / TMC 1543 / L948) (Mycobacterium abscessus).